Consider the following 288-residue polypeptide: MRILIITGLSGSGKSTAVRALEDEGFFCQDNLPVMLFPTFVELVDKAKERVRDVALVMDIRGRDFHAGYEKVFQEISEAGHFVEILFFDATDEVLIRRFSETRRRHPAMESGSVPEGIRYEREQLAGLRRLATMIIDTSELNVHQLRELVISHVKGNHGGREMTIHLQSFGYRYGIPLESDLVMDVRFLPNPYFVPELKEFSGLNPNVRDYVLKYEETRIFLNKFKEMLEFLLPGYRREGKSYLTVSIGCTGGRHRSVVITEEMRDFFRTKQLNLNVSHRDMKKGLEK.

8–15 lines the ATP pocket; the sequence is GLSGSGKS. 59 to 62 serves as a coordination point for GTP; it reads DIRG.

Belongs to the RapZ-like family.

Its function is as follows. Displays ATPase and GTPase activities. The protein is Nucleotide-binding protein Gura_2968 of Geotalea uraniireducens (strain Rf4) (Geobacter uraniireducens).